Here is a 222-residue protein sequence, read N- to C-terminus: Probable fimbrial chaperone EcpB (222 aa).

The first 20 residues, 1–20 (MKKHLLPLALLFSGISPAQA), serve as a signal peptide directing secretion.

This sequence belongs to the EcpB/EcpE family.

In terms of biological role, part of the ecpRABCDE operon, which encodes the E.coli common pilus (ECP). ECP is found in both commensal and pathogenic strains and plays a dual role in early-stage biofilm development and host cell recognition. The polypeptide is Probable fimbrial chaperone EcpB (ecpB) (Escherichia coli (strain K12)).